The chain runs to 278 residues: Small ribosomal subunit protein uS2 (278 aa).

The segment at 235-278 (AEAAEEAPKRERKAKAAVKKERTKKEDDDALNANVAGKFAKDEE) is disordered. Over residues 252–261 (VKKERTKKED) the composition is skewed to basic and acidic residues.

Belongs to the universal ribosomal protein uS2 family.

This is Small ribosomal subunit protein uS2 from Parabacteroides distasonis (strain ATCC 8503 / DSM 20701 / CIP 104284 / JCM 5825 / NCTC 11152).